A 552-amino-acid polypeptide reads, in one-letter code: Probable ABC transporter ATP-binding/permease protein HI_0664 (552 aa).

The next 6 membrane-spanning stretches (helical) occupy residues 22–42 (IMAF…FIMV), 52–72 (LNFD…VLAV), 139–159 (IAPI…FAQL), 162–182 (WFVL…PIIT), 253–273 (EVAV…LFSL), and 278–298 (FAAF…VIAL). The ABC transmembrane type-1 domain maps to 23–307 (MAFTITMGTL…LSNLSSNLLQ (285 aa)). The ABC transporter domain occupies 340–552 (IDVENVNFAY…VIGIENGRMS (213 aa)). 372-379 (GRSGSGKS) serves as a coordination point for ATP.

This sequence belongs to the ABC transporter superfamily. Lipid exporter (TC 3.A.1.106) family.

It is found in the cell inner membrane. This Haemophilus influenzae (strain ATCC 51907 / DSM 11121 / KW20 / Rd) protein is Probable ABC transporter ATP-binding/permease protein HI_0664.